Here is a 367-residue protein sequence, read N- to C-terminus: ABI gene family member 3 (367 aa).

Positions 36 to 64 (CEDNYLQATDKRKALEETMAFTTQALASV) form a coiled coil. The segment at 163–273 (LSRTGTLSRK…LEVSQPPLEA (111 aa)) is disordered. Residues 206 to 225 (SAASSASSLASAGSAEGASG) show a composition bias toward low complexity. Ser-216 and Ser-219 each carry phosphoserine. Positions 236–264 (ATPPPPPVAPVTPPPPPLSAEVFLPPPPL) are enriched in pro residues. Residues 309-367 (SYLEKVVTLYPYTRQKDNELSFSEGTVICVTRRYSDGWCEGVSSEGTGFFPGNYVEPSC) enclose the SH3 domain. Ser-343 is modified (phosphoserine).

This sequence belongs to the ABI family. As to quaternary structure, may interact with PAK1 and PAK2. Probably interacts with TARSH.

It is found in the cytoplasm. Functionally, inhibits ectopic tumor cell metastasis of SRD cells. In vitro, reduces cell motility. In Mus musculus (Mouse), this protein is ABI gene family member 3 (Abi3).